The chain runs to 108 residues: Nucleoid-associated protein IL1848 (108 aa).

2 disordered regions span residues 1–26 (MFKG…AQEE) and 88–108 (KERM…KMPF). Residues 9–26 (MMKQAQQMQERMQQAQEE) are compositionally biased toward low complexity.

The protein belongs to the YbaB/EbfC family. As to quaternary structure, homodimer.

It is found in the cytoplasm. It localises to the nucleoid. In terms of biological role, binds to DNA and alters its conformation. May be involved in regulation of gene expression, nucleoid organization and DNA protection. In Idiomarina loihiensis (strain ATCC BAA-735 / DSM 15497 / L2-TR), this protein is Nucleoid-associated protein IL1848.